We begin with the raw amino-acid sequence, 131 residues long: Lymphocyte antigen 6E (131 aa).

Positions 1–20 (MKIFLPVLLAALLGVERASS) are cleaved as a signal peptide. Residues 21 to 101 (LMCFSCLNQK…CCQSFLCNFS (81 aa)) form the UPAR/Ly6 domain. Intrachain disulfides connect Cys-23/Cys-48, Cys-26/Cys-35, Cys-41/Cys-71, Cys-75/Cys-92, and Cys-93/Cys-98. A glycan (N-linked (GlcNAc...) asparagine) is linked at Asn-99. Ser-101 carries GPI-anchor amidated serine lipidation. Positions 102 to 131 (AADGGLRASVTLLGAGLLLSLLPALLRFGP) are cleaved as a propeptide — removed in mature form.

Interacts with CHRNA4. As to expression, widely expressed, predominantly in liver, kidney, ovary, spleen and peripheral blood Leukocytes.

The protein localises to the cell membrane. Functionally, GPI-anchored cell surface protein that regulates T-lymphocytes proliferation, differentiation, and activation. Regulates the T-cell receptor (TCR) signaling by interacting with component CD3Z/CD247 at the plasma membrane, leading to CD3Z/CD247 phosphorylation modulation. Restricts the entry of human coronaviruses, including SARS-CoV, MERS-CoV and SARS-CoV-2, by interfering with spike protein-mediated membrane fusion. Also plays an essential role in placenta formation by acting as the main receptor for syncytin-A (SynA). Therefore, participates in the normal fusion of syncytiotrophoblast layer I (SynT-I) and in the proper morphogenesis of both fetal and maternal vasculatures within the placenta. May also act as a modulator of nicotinic acetylcholine receptors (nAChRs) activity. Its function is as follows. (Microbial infection) Promotes entry, likely through an enhanced virus-cell fusion process, of various viruses including HIV-1, West Nile virus, dengue virus and Zika virus. In contrast, the paramyxovirus PIV5, which enters at the plasma membrane, does not require LY6E. Mechanistically, adopts a microtubule-like organization upon viral infection and enhances viral uncoating after endosomal escape. The sequence is that of Lymphocyte antigen 6E from Homo sapiens (Human).